Here is a 312-residue protein sequence, read N- to C-terminus: R2-like ligand binding oxidase (312 aa).

Mn(2+) contacts are provided by E68, E101, and H104. Residues 71–162 constitute a cross-link (3-(O4'-tyrosyl)-valine (Val-Tyr)); sequence VTQDIQPFMA…AAQVRASATY (92 aa). Fe cation is bound at residue E101. Fe cation contacts are provided by E167, E202, and H205.

Belongs to the ribonucleoside diphosphate reductase small chain family. R2-like ligand binding oxidase subfamily. Homodimer. Fe cation serves as cofactor. Requires Mn(2+) as cofactor.

Functionally, probable oxidase that might be involved in lipid metabolism. In Mycobacterium sp. (strain JLS), this protein is R2-like ligand binding oxidase.